A 144-amino-acid chain; its full sequence is D-aminoacyl-tRNA deacylase (144 aa).

The Gly-cisPro motif, important for rejection of L-amino acids motif lies at 136–137 (GP).

This sequence belongs to the DTD family. In terms of assembly, homodimer.

Its subcellular location is the cytoplasm. It carries out the reaction glycyl-tRNA(Ala) + H2O = tRNA(Ala) + glycine + H(+). It catalyses the reaction a D-aminoacyl-tRNA + H2O = a tRNA + a D-alpha-amino acid + H(+). Its function is as follows. An aminoacyl-tRNA editing enzyme that deacylates mischarged D-aminoacyl-tRNAs. Also deacylates mischarged glycyl-tRNA(Ala), protecting cells against glycine mischarging by AlaRS. Acts via tRNA-based rather than protein-based catalysis; rejects L-amino acids rather than detecting D-amino acids in the active site. By recycling D-aminoacyl-tRNA to D-amino acids and free tRNA molecules, this enzyme counteracts the toxicity associated with the formation of D-aminoacyl-tRNA entities in vivo and helps enforce protein L-homochirality. This chain is D-aminoacyl-tRNA deacylase, found in Histophilus somni (strain 129Pt) (Haemophilus somnus).